A 244-amino-acid chain; its full sequence is MSAAAYMDFVAAQCLVSISNRAAVPEHGGAPEAERLRLPEREVTKEHGDPGDTWKDYCTLVTIAKSLLDLNKYRPIQTPSVCSDSLESPDEDIGSDSDVTTESGSSPSHSPEERQDSGSAPSPLSLLHSGVASKGKHASEKRHKCPYSGCGKVYGKSSHLKAHYRVHTGERPFPCTWPDCLKKFSRSDELTRHYRTHTGEKQFRCPLCEKRFMRSDHLTKHARRHTVFHPSMIKRSKKALACPL.

Disordered stretches follow at residues Glu26–Gly51 and Pro79–His143. Basic and acidic residues predominate over residues Glu32–Gly51. Ser122 carries the post-translational modification Phosphoserine. Basic residues predominate over residues Lys134–His143. C2H2-type zinc fingers lie at residues His143–His167, Phe173–His197, and Phe203–His225.

This sequence belongs to the Sp1 C2H2-type zinc-finger protein family. Interacts with ZZEF1.

The protein resides in the nucleus. In terms of biological role, transcription factor that binds to GC box promoter elements. Selectively activates mRNA synthesis from genes containing tandem repeats of GC boxes but represses genes with a single GC box. Acts as an epidermal circadian transcription factor regulating keratinocyte proliferation. The polypeptide is Krueppel-like factor 9 (Klf9) (Mus musculus (Mouse)).